We begin with the raw amino-acid sequence, 279 residues long: Sarcosine/dimethylglycine N-methyltransferase (279 aa).

Belongs to the methyltransferase superfamily. In terms of assembly, monomer.

The catalysed reaction is sarcosine + 2 S-adenosyl-L-methionine = glycine betaine + 2 S-adenosyl-L-homocysteine + 2 H(+). It carries out the reaction sarcosine + S-adenosyl-L-methionine = N,N-dimethylglycine + S-adenosyl-L-homocysteine + H(+). The enzyme catalyses N,N-dimethylglycine + S-adenosyl-L-methionine = glycine betaine + S-adenosyl-L-homocysteine + H(+). It participates in amine and polyamine biosynthesis; betaine biosynthesis via glycine pathway; betaine from glycine: step 2/3. Its pathway is amine and polyamine biosynthesis; betaine biosynthesis via glycine pathway; betaine from glycine: step 3/3. With respect to regulation, p-chloromercuribenzoate acid inhibits 23% of the SDMT activities on sarcosine and dimethylglycine, and S-adenosylhomocysteine (AdoHcy) inhibits completely GSMT activities. Its function is as follows. Catalyzes the methylation of sarcosine and dimethylglycine to dimethylglycine and betaine, respectively, with S-adenosylmethionine (AdoMet) acting as the methyl donor. It has strict specificity for sarcosine and dimethylglycine as the methyl group acceptors. The protein is Sarcosine/dimethylglycine N-methyltransferase of Halorhodospira halochloris (Ectothiorhodospira halochloris).